The following is a 549-amino-acid chain: Glucose-6-phosphate isomerase (549 aa).

The active-site Proton donor is E355. Active-site residues include H386 and K514.

This sequence belongs to the GPI family.

It is found in the cytoplasm. The catalysed reaction is alpha-D-glucose 6-phosphate = beta-D-fructose 6-phosphate. The protein operates within carbohydrate biosynthesis; gluconeogenesis. Its pathway is carbohydrate degradation; glycolysis; D-glyceraldehyde 3-phosphate and glycerone phosphate from D-glucose: step 2/4. Functionally, catalyzes the reversible isomerization of glucose-6-phosphate to fructose-6-phosphate. This is Glucose-6-phosphate isomerase from Cronobacter sakazakii (strain ATCC BAA-894) (Enterobacter sakazakii).